Here is a 134-residue protein sequence, read N- to C-terminus: ATP synthase epsilon chain (134 aa).

This sequence belongs to the ATPase epsilon chain family. In terms of assembly, F-type ATPases have 2 components, CF(1) - the catalytic core - and CF(0) - the membrane proton channel. CF(1) has five subunits: alpha(3), beta(3), gamma(1), delta(1), epsilon(1). CF(0) has three main subunits: a, b and c.

It is found in the cell membrane. Its function is as follows. Produces ATP from ADP in the presence of a proton gradient across the membrane. This Listeria monocytogenes serotype 4a (strain HCC23) protein is ATP synthase epsilon chain.